A 658-amino-acid polypeptide reads, in one-letter code: Aspartate--tRNA ligase, mitochondrial (658 aa).

Position 198 (Glu-198) interacts with L-aspartate. Residues Gln-226–Lys-229 are aspartate. L-aspartate is bound at residue Arg-248. ATP is bound by residues Arg-248–Glu-250 and Glu-553. An L-aspartate-binding site is contributed by Arg-560. Gly-604 to Arg-607 contacts ATP.

This sequence belongs to the class-II aminoacyl-tRNA synthetase family. Type 1 subfamily.

Its subcellular location is the mitochondrion matrix. It catalyses the reaction tRNA(Asp) + L-aspartate + ATP = L-aspartyl-tRNA(Asp) + AMP + diphosphate. Its function is as follows. Catalyzes the attachment of aspartate to tRNA(Asp) in the mitochondrion. This chain is Aspartate--tRNA ligase, mitochondrial (MSD1), found in Saccharomyces cerevisiae (strain ATCC 204508 / S288c) (Baker's yeast).